The following is a 152-amino-acid chain: Small ribosomal subunit protein uS15 (152 aa).

Belongs to the universal ribosomal protein uS15 family. In terms of assembly, part of the 30S ribosomal subunit.

This is Small ribosomal subunit protein uS15 from Methanocorpusculum labreanum (strain ATCC 43576 / DSM 4855 / Z).